A 499-amino-acid polypeptide reads, in one-letter code: Ribose import ATP-binding protein RbsA 1 (499 aa).

2 consecutive ABC transporter domains span residues 5-240 (LEMR…GRSI) and 249-494 (TEPG…TAGS). 37-44 (GENGAGKS) is an ATP binding site.

It belongs to the ABC transporter superfamily. Ribose importer (TC 3.A.1.2.1) family. The complex is composed of an ATP-binding protein (RbsA), two transmembrane proteins (RbsC) and a solute-binding protein (RbsB).

It is found in the cell membrane. It carries out the reaction D-ribose(out) + ATP + H2O = D-ribose(in) + ADP + phosphate + H(+). Part of the ABC transporter complex RbsABC involved in ribose import. Responsible for energy coupling to the transport system. The protein is Ribose import ATP-binding protein RbsA 1 of Rubrobacter xylanophilus (strain DSM 9941 / JCM 11954 / NBRC 16129 / PRD-1).